Reading from the N-terminus, the 435-residue chain is MTASPLAQKATDAFNAPICETDPEIAELLDSELGRQRNGLEMIASENFVPRAVLQCQGSVLTNKYAEGYPGHRYYGGCEYVDQIETIARERAKALFGAEYVNVQPHSGAQANAAVYQALVKPGDTVLGLALDHGGHLTHGMKINFSGRFYHAEAYGVNPVTFRIDPEIIRQRALETHPAMIIGGWSAYPRIEDFKAMKEIADEVGAKFWVDMAHFAGLVAAGLHPSPVPYADVVSSTSHKTFGGPRSGFILAKQEYAKKLNSSVFPGQQGGPLMHVIAGKAVSFKVAGTPEFKDRMQRTLDGAKILAERLLADDVKANGISVLTGGTDVHLVMVDLRNSEMDGQQGEDLLAACGITINRNTVPFDPRPASVASGLRIGTSALATRGFGPKEYEEVADIIGTALAAGPSADVTALKARVDKLAEDFPLYPDLDQIH.

Residues L131 and 135–137 (GHL) contribute to the (6S)-5,6,7,8-tetrahydrofolate site. K240 carries the post-translational modification N6-(pyridoxal phosphate)lysine.

Belongs to the SHMT family. Homodimer. Requires pyridoxal 5'-phosphate as cofactor.

Its subcellular location is the cytoplasm. The enzyme catalyses (6R)-5,10-methylene-5,6,7,8-tetrahydrofolate + glycine + H2O = (6S)-5,6,7,8-tetrahydrofolate + L-serine. It functions in the pathway one-carbon metabolism; tetrahydrofolate interconversion. It participates in amino-acid biosynthesis; glycine biosynthesis; glycine from L-serine: step 1/1. In terms of biological role, catalyzes the reversible interconversion of serine and glycine with tetrahydrofolate (THF) serving as the one-carbon carrier. This reaction serves as the major source of one-carbon groups required for the biosynthesis of purines, thymidylate, methionine, and other important biomolecules. Also exhibits THF-independent aldolase activity toward beta-hydroxyamino acids, producing glycine and aldehydes, via a retro-aldol mechanism. In Bifidobacterium longum subsp. infantis (strain ATCC 15697 / DSM 20088 / JCM 1222 / NCTC 11817 / S12), this protein is Serine hydroxymethyltransferase.